The chain runs to 185 residues: Ribose 1,5-bisphosphate phosphokinase PhnN (185 aa).

13–20 serves as a coordination point for ATP; it reads GPSGAGKD.

This sequence belongs to the ribose 1,5-bisphosphokinase family.

The enzyme catalyses alpha-D-ribose 1,5-bisphosphate + ATP = 5-phospho-alpha-D-ribose 1-diphosphate + ADP. The protein operates within metabolic intermediate biosynthesis; 5-phospho-alpha-D-ribose 1-diphosphate biosynthesis; 5-phospho-alpha-D-ribose 1-diphosphate from D-ribose 5-phosphate (route II): step 3/3. In terms of biological role, catalyzes the phosphorylation of ribose 1,5-bisphosphate to 5-phospho-D-ribosyl alpha-1-diphosphate (PRPP). The protein is Ribose 1,5-bisphosphate phosphokinase PhnN of Chromobacterium violaceum (strain ATCC 12472 / DSM 30191 / JCM 1249 / CCUG 213 / NBRC 12614 / NCIMB 9131 / NCTC 9757 / MK).